Consider the following 123-residue polypeptide: Large ribosomal subunit protein eL8 (123 aa).

This sequence belongs to the eukaryotic ribosomal protein eL8 family. As to quaternary structure, part of the 50S ribosomal subunit. Probably part of the RNase P complex.

It is found in the cytoplasm. Multifunctional RNA-binding protein that recognizes the K-turn motif in ribosomal RNA, the RNA component of RNase P, box H/ACA, box C/D and box C'/D' sRNAs. This chain is Large ribosomal subunit protein eL8, found in Methanopyrus kandleri (strain AV19 / DSM 6324 / JCM 9639 / NBRC 100938).